The primary structure comprises 173 residues: Rubredoxin-2 (173 aa).

Rubredoxin-like domains are found at residues 2–53 and 119–170; these read ASYK…FMLI and YLKW…YVLY. Positions 6, 9, 39, 42, 124, 127, 157, and 160 each coordinate Fe cation.

The protein belongs to the rubredoxin family. The cofactor is Fe(3+).

The protein resides in the cytoplasm. It participates in hydrocarbon metabolism; alkane degradation. Functionally, involved in the hydrocarbon hydroxylating system, which transfers electrons from NADH to rubredoxin reductase and then through rubredoxin to alkane 1 monooxygenase. The chain is Rubredoxin-2 (alkG) from Ectopseudomonas oleovorans (Pseudomonas oleovorans).